Consider the following 298-residue polypeptide: Ethylmalonyl-CoA decarboxylase (298 aa).

It belongs to the enoyl-CoA hydratase/isomerase family.

Its subcellular location is the cytoplasm. The protein resides in the cytosol. It carries out the reaction (2S)-ethylmalonyl-CoA + H(+) = butanoyl-CoA + CO2. It catalyses the reaction (S)-methylmalonyl-CoA + H(+) = propanoyl-CoA + CO2. The enzyme catalyses (2R)-ethylmalonyl-CoA + H(+) = butanoyl-CoA + CO2. Functionally, decarboxylates ethylmalonyl-CoA, a potentially toxic metabolite, to form butyryl-CoA, suggesting it might be involved in metabolite proofreading. Acts preferentially on (S)-ethylmalonyl-CoA but also has some activity on the (R)-isomer. Also has methylmalonyl-CoA decarboxylase activity at lower level. In Gallus gallus (Chicken), this protein is Ethylmalonyl-CoA decarboxylase (ECHDC1).